We begin with the raw amino-acid sequence, 556 residues long: Genetic interactor of prohibitins 3, mitochondrial (556 aa).

A mitochondrion-targeting transit peptide spans M1 to K21. The CP-type G domain maps to E113–S305.

This sequence belongs to the TRAFAC class YlqF/YawG GTPase family. GEP3 subfamily.

The protein localises to the mitochondrion. Functionally, interacts genetically with prohibitins and thus may be involved in the mitochondrial lipid metabolism. The polypeptide is Genetic interactor of prohibitins 3, mitochondrial (GEP3) (Saccharomyces cerevisiae (strain AWRI1631) (Baker's yeast)).